Reading from the N-terminus, the 287-residue chain is Fructose-1,6-bisphosphatase class 1 (287 aa).

Residues E67, D87, L89, and D90 each coordinate Mg(2+). Substrate is bound by residues 90–93 (DGSS), Y195, and K225. E231 is a binding site for Mg(2+).

It belongs to the FBPase class 1 family. In terms of assembly, homotetramer. Mg(2+) is required as a cofactor.

The protein localises to the cytoplasm. The enzyme catalyses beta-D-fructose 1,6-bisphosphate + H2O = beta-D-fructose 6-phosphate + phosphate. Its pathway is carbohydrate biosynthesis; gluconeogenesis. This Halobacterium salinarum (strain ATCC 29341 / DSM 671 / R1) protein is Fructose-1,6-bisphosphatase class 1.